The sequence spans 50 residues: MSGFMNSLRKCIGNINSHLEGFMRTYLLRIIRKIKPAAQLSIEDDHYKCL.

This is an uncharacterized protein from Ornithodoros (relapsing fever ticks).